Consider the following 388-residue polypeptide: Chorismate synthase (388 aa).

The NADP(+) site is built by arginine 39 and arginine 45. Residues 130–132, 251–252, glycine 296, 311–315, and arginine 337 each bind FMN; these read RSS, NA, and KPIPT.

Belongs to the chorismate synthase family. Homotetramer. Requires FMNH2 as cofactor.

The catalysed reaction is 5-O-(1-carboxyvinyl)-3-phosphoshikimate = chorismate + phosphate. The protein operates within metabolic intermediate biosynthesis; chorismate biosynthesis; chorismate from D-erythrose 4-phosphate and phosphoenolpyruvate: step 7/7. In terms of biological role, catalyzes the anti-1,4-elimination of the C-3 phosphate and the C-6 proR hydrogen from 5-enolpyruvylshikimate-3-phosphate (EPSP) to yield chorismate, which is the branch point compound that serves as the starting substrate for the three terminal pathways of aromatic amino acid biosynthesis. This reaction introduces a second double bond into the aromatic ring system. The chain is Chorismate synthase from Geobacillus kaustophilus (strain HTA426).